A 547-amino-acid chain; its full sequence is Glucose-6-phosphate isomerase (547 aa).

The active-site Proton donor is Glu351. Catalysis depends on residues His382 and Lys509.

It belongs to the GPI family.

Its subcellular location is the cytoplasm. The catalysed reaction is alpha-D-glucose 6-phosphate = beta-D-fructose 6-phosphate. It participates in carbohydrate biosynthesis; gluconeogenesis. The protein operates within carbohydrate degradation; glycolysis; D-glyceraldehyde 3-phosphate and glycerone phosphate from D-glucose: step 2/4. Functionally, catalyzes the reversible isomerization of glucose-6-phosphate to fructose-6-phosphate. This is Glucose-6-phosphate isomerase from Coxiella burnetii (strain RSA 493 / Nine Mile phase I).